A 374-amino-acid polypeptide reads, in one-letter code: Homoserine O-acetyltransferase (374 aa).

The 309-residue stretch at 45–353 folds into the AB hydrolase-1 domain; that stretch reads NAILVLHALT…PYGHDAFLIE (309 aa). Serine 151 functions as the Nucleophile in the catalytic mechanism. Arginine 220 provides a ligand contact to substrate. Active-site residues include aspartate 314 and histidine 347. Aspartate 348 is a binding site for substrate.

This sequence belongs to the AB hydrolase superfamily. MetX family. In terms of assembly, homodimer.

It is found in the cytoplasm. The catalysed reaction is L-homoserine + acetyl-CoA = O-acetyl-L-homoserine + CoA. Its pathway is amino-acid biosynthesis; L-methionine biosynthesis via de novo pathway; O-acetyl-L-homoserine from L-homoserine: step 1/1. Transfers an acetyl group from acetyl-CoA to L-homoserine, forming acetyl-L-homoserine. This is Homoserine O-acetyltransferase from Moorella thermoacetica (strain ATCC 39073 / JCM 9320).